A 288-amino-acid chain; its full sequence is MAGEQTTTEYISHHLTNWTYGYLPGEGWKVAYNAEEASAMGFKAIHLDSMLWSIGLGIVFCAIFWMVARKVTSGVPGKTQAAVEMIVEFVDNNVRDSYSGTSKLIAPLALTIFVWIFLMNLMDLLPVDFIPMIAGQIGALMGHDPHHVYFKIVPTTDPNITLGMSFSVFILILFYSIKEKGLGGFVGELTLHPFSAKNPIVQIILIPINFILEFVTLIAKPISLGLRLFGNMYAGELIFILIALMPFWIQWALSVPWAIFHILIITLQAFVFMMLTIVYMSLASSTEH.

6 helical membrane-spanning segments follow: residues 47–67 (LDSMLWSIGLGIVFCAIFWMV), 104–124 (LIAPLALTIFVWIFLMNLMDL), 157–177 (DPNITLGMSFSVFILILFYSI), 199–219 (PIVQIILIPINFILEFVTLIA), 237–257 (LIFILIALMPFWIQWALSVPW), and 258–278 (AIFHILIITLQAFVFMMLTIV).

This sequence belongs to the ATPase A chain family. F-type ATPases have 2 components, CF(1) - the catalytic core - and CF(0) - the membrane proton channel. CF(1) has five subunits: alpha(3), beta(3), gamma(1), delta(1), epsilon(1). CF(0) has three main subunits: a(1), b(2) and c(9-12). The alpha and beta chains form an alternating ring which encloses part of the gamma chain. CF(1) is attached to CF(0) by a central stalk formed by the gamma and epsilon chains, while a peripheral stalk is formed by the delta and b chains.

The protein localises to the cell inner membrane. Functionally, key component of the proton channel; it plays a direct role in the translocation of protons across the membrane. This chain is ATP synthase subunit a, found in Psychrobacter cryohalolentis (strain ATCC BAA-1226 / DSM 17306 / VKM B-2378 / K5).